Consider the following 252-residue polypeptide: Trans-aconitate 2-methyltransferase (252 aa).

This sequence belongs to the methyltransferase superfamily. Tam family.

It is found in the cytoplasm. It catalyses the reaction trans-aconitate + S-adenosyl-L-methionine = (E)-3-(methoxycarbonyl)pent-2-enedioate + S-adenosyl-L-homocysteine. Catalyzes the S-adenosylmethionine monomethyl esterification of trans-aconitate. The protein is Trans-aconitate 2-methyltransferase of Escherichia coli O7:K1 (strain IAI39 / ExPEC).